The sequence spans 288 residues: MIIQGNQLDSLPKAEDWEAFAESYKRIAEVAVMKPVQALLQCLDDRLPLSGAVGILDNGSGPGIIMSSLIERYGPQLPPDCVLTCVDYAPAMIDQVDKARIKAVEEDADSAWGRVEGKVLDALDLHSIADESQSHIAAGLLYNLTTDPAKCLSECKRTLQPGGVLAVSAWEGNDWIEMLRVVPLIKPDLKTAIQPKWSTVDAVRWDLELAGFREVHVQRIPIKIPFTSHALFVDTLMRYQPRMVAMLRTFTEDEKTELRRLLMNEMKVICPSQPGMMSGAVMVGAGVR.

S-adenosyl-L-methionine-binding positions include aspartate 87 and 121–122 (DA).

Belongs to the class I-like SAM-binding methyltransferase superfamily.

The protein operates within mycotoxin biosynthesis. Its function is as follows. Methyltransferase; part of the gene cluster that mediates the biosynthesis of UCS1025A, a member of the pyrrolizidinone family that acts as a strong telomerase inhibitor and displays potent antibacterial and antitumor properties. These compounds share a hemiaminal-containing pyrrolizidinone core fused with a gamma-lactone, giving a furopyrrolizidine that is connected to a decalin fragment. The polyketide synthase module (PKS) of the PKS-NRPS ucsA is responsible for the synthesis of the polyketide backbone via the condensation of an acetyl-CoA starter unit with 6 malonyl-CoA units. The downstream nonribosomal peptide synthetase (NRPS) module then amidates the carboxyl end of the polyketide with a 2S,3S-methylproline derived from L-isoleucine by the 2-oxoglutarate-dependent dioxygenase ucsF which converts L-isoleucine to (4S,5S)-4-methylpyrroline-5-carboxylate that is further converted to 2S,3S-methylproline by the pyrroline-5-carboxylate reductase ucsG. Reductive release of the completed aminoacyl polyketide from the assembly line can form the 3-pyrrolin-2-one structure via an intramolecular Knoevenagel reaction. Because ucsA lacks a designated enoylreductase (ER) domain, the required activity is provided the enoyl reductase ucsL. This keto acyclic precursor is the substrate of the Diels-Alderase ucsH, that catalyzes the Diels-Alder cycloaddition. Oxidation of the 3S-methyl group to a carboxylate by the cytochrome P450 monooxygenase ucsK allows an oxa-Michael cyclization that might involve the reductase/dehydrogenase ucsI and which furnishes the furopyrrolizidine. The oxidase ucsJ likely plays a critical role in stereoselective reduction of the C5-C6 double bond to afford the required R-configured carboxylate group. Further enolization and oxidation at C5 by an unidentified enzyme affords the last intermediate that can undergo oxa-Michael cyclization to yield UCS1025A. The chain is Methyltransferase ucsB from Acremonium sp.